We begin with the raw amino-acid sequence, 89 residues long: Small ribosomal subunit protein uS15 (89 aa).

This sequence belongs to the universal ribosomal protein uS15 family. In terms of assembly, part of the 30S ribosomal subunit. Forms a bridge to the 50S subunit in the 70S ribosome, contacting the 23S rRNA.

Its function is as follows. One of the primary rRNA binding proteins, it binds directly to 16S rRNA where it helps nucleate assembly of the platform of the 30S subunit by binding and bridging several RNA helices of the 16S rRNA. Forms an intersubunit bridge (bridge B4) with the 23S rRNA of the 50S subunit in the ribosome. In Buchnera aphidicola subsp. Acyrthosiphon pisum (strain 5A), this protein is Small ribosomal subunit protein uS15.